The sequence spans 106 residues: Large ribosomal subunit protein bL21 (106 aa).

It belongs to the bacterial ribosomal protein bL21 family. As to quaternary structure, part of the 50S ribosomal subunit. Contacts protein L20.

Functionally, this protein binds to 23S rRNA in the presence of protein L20. This Chlamydia abortus (strain DSM 27085 / S26/3) (Chlamydophila abortus) protein is Large ribosomal subunit protein bL21.